The primary structure comprises 609 residues: Spore-specific protein YSW1 (609 aa).

The disordered stretch occupies residues 1–24 (MSSLADTVEGSEAKRGRFSNNALT). Phosphoserine is present on residues S159 and S160. A disordered region spans residues 162-225 (DENESHFTDA…DDEFSPATPP (64 aa)). Residues 169-179 (TDANSHVMQSK) show a composition bias toward polar residues. Basic and acidic residues predominate over residues 200-209 (LKKEYEKSFE). Over residues 210–219 (EYSDDSDDEF) the composition is skewed to acidic residues.

The protein is Spore-specific protein YSW1 (YSW1) of Saccharomyces cerevisiae (strain ATCC 204508 / S288c) (Baker's yeast).